Reading from the N-terminus, the 298-residue chain is N-acetylmuramic acid 6-phosphate etherase (298 aa).

The 164-residue stretch at 55–218 folds into the SIS domain; sequence IHTQVSGGGR…STGLMIKSGK (164 aa). E83 serves as the catalytic Proton donor. The active site involves E114.

This sequence belongs to the GCKR-like family. MurNAc-6-P etherase subfamily. In terms of assembly, homodimer.

It catalyses the reaction N-acetyl-D-muramate 6-phosphate + H2O = N-acetyl-D-glucosamine 6-phosphate + (R)-lactate. It functions in the pathway amino-sugar metabolism; 1,6-anhydro-N-acetylmuramate degradation. Its pathway is amino-sugar metabolism; N-acetylmuramate degradation. It participates in cell wall biogenesis; peptidoglycan recycling. In terms of biological role, specifically catalyzes the cleavage of the D-lactyl ether substituent of MurNAc 6-phosphate, producing GlcNAc 6-phosphate and D-lactate. Together with AnmK, is also required for the utilization of anhydro-N-acetylmuramic acid (anhMurNAc) either imported from the medium or derived from its own cell wall murein, and thus plays a role in cell wall recycling. This chain is N-acetylmuramic acid 6-phosphate etherase, found in Escherichia coli O6:K15:H31 (strain 536 / UPEC).